The sequence spans 295 residues: Bifunctional protein FolD (295 aa).

NADP(+) contacts are provided by residues Gly-166–Ser-168, Ser-191, and Ile-232.

Belongs to the tetrahydrofolate dehydrogenase/cyclohydrolase family. Homodimer.

It catalyses the reaction (6R)-5,10-methylene-5,6,7,8-tetrahydrofolate + NADP(+) = (6R)-5,10-methenyltetrahydrofolate + NADPH. It carries out the reaction (6R)-5,10-methenyltetrahydrofolate + H2O = (6R)-10-formyltetrahydrofolate + H(+). The protein operates within one-carbon metabolism; tetrahydrofolate interconversion. Catalyzes the oxidation of 5,10-methylenetetrahydrofolate to 5,10-methenyltetrahydrofolate and then the hydrolysis of 5,10-methenyltetrahydrofolate to 10-formyltetrahydrofolate. This chain is Bifunctional protein FolD, found in Rhodopseudomonas palustris (strain BisB18).